Reading from the N-terminus, the 204-residue chain is Methylthioribulose-1-phosphate dehydratase (204 aa).

H95 and H97 together coordinate Zn(2+).

The protein belongs to the aldolase class II family. MtnB subfamily. Requires Zn(2+) as cofactor.

The catalysed reaction is 5-(methylsulfanyl)-D-ribulose 1-phosphate = 5-methylsulfanyl-2,3-dioxopentyl phosphate + H2O. It participates in amino-acid biosynthesis; L-methionine biosynthesis via salvage pathway; L-methionine from S-methyl-5-thio-alpha-D-ribose 1-phosphate: step 2/6. Functionally, catalyzes the dehydration of methylthioribulose-1-phosphate (MTRu-1-P) into 2,3-diketo-5-methylthiopentyl-1-phosphate (DK-MTP-1-P). The chain is Methylthioribulose-1-phosphate dehydratase from Parvibaculum lavamentivorans (strain DS-1 / DSM 13023 / NCIMB 13966).